The sequence spans 38 residues: Large ribosomal subunit protein bL36 (38 aa).

It belongs to the bacterial ribosomal protein bL36 family.

This is Large ribosomal subunit protein bL36 from Streptococcus agalactiae serotype III (strain NEM316).